The chain runs to 333 residues: Fructose-1,6-bisphosphatase class 1 (333 aa).

Mg(2+) contacts are provided by Glu-92, Asp-113, Leu-115, and Asp-116. Substrate-binding positions include 116 to 119, Asn-209, Tyr-242, and Lys-272; that span reads DGSS. A Mg(2+)-binding site is contributed by Glu-278.

The protein belongs to the FBPase class 1 family. In terms of assembly, homotetramer. Mg(2+) serves as cofactor.

It is found in the cytoplasm. It catalyses the reaction beta-D-fructose 1,6-bisphosphate + H2O = beta-D-fructose 6-phosphate + phosphate. It functions in the pathway carbohydrate biosynthesis; Calvin cycle. In Chlorobaculum parvum (strain DSM 263 / NCIMB 8327) (Chlorobium vibrioforme subsp. thiosulfatophilum), this protein is Fructose-1,6-bisphosphatase class 1.